Consider the following 113-residue polypeptide: Hydrogenase maturation factor HypA (113 aa).

Histidine 2 is a binding site for Ni(2+). 4 residues coordinate Zn(2+): cysteine 70, cysteine 73, cysteine 86, and cysteine 88.

This sequence belongs to the HypA/HybF family.

Involved in the maturation of [NiFe] hydrogenases. Required for nickel insertion into the metal center of the hydrogenase. The chain is Hydrogenase maturation factor HypA from Trichormus variabilis (strain ATCC 29413 / PCC 7937) (Anabaena variabilis).